A 974-amino-acid chain; its full sequence is UvrABC system protein A (974 aa).

ATP is bound at residue 34–41 (GLSGSGKS). ABC transporter domains are found at residues 331–610 (WARS…TNSL) and 630–959 (ISKT…QFLK). An ATP-binding site is contributed by 663 to 670 (GVSGGGKS). A C4-type zinc finger spans residues 762–788 (CEACQGDGVIKIEMHFLPDVYVTCDVC).

This sequence belongs to the ABC transporter superfamily. UvrA family. In terms of assembly, forms a heterotetramer with UvrB during the search for lesions.

Its subcellular location is the cytoplasm. In terms of biological role, the UvrABC repair system catalyzes the recognition and processing of DNA lesions. UvrA is an ATPase and a DNA-binding protein. A damage recognition complex composed of 2 UvrA and 2 UvrB subunits scans DNA for abnormalities. When the presence of a lesion has been verified by UvrB, the UvrA molecules dissociate. The polypeptide is UvrABC system protein A (Brucella melitensis biotype 1 (strain ATCC 23456 / CCUG 17765 / NCTC 10094 / 16M)).